The chain runs to 341 residues: Putative [LysW]-lysine/[LysW]-ornithine hydrolase (341 aa).

His-62 contacts Zn(2+). Residue Asp-64 is part of the active site. Asp-86 serves as a coordination point for Zn(2+). The active-site Proton acceptor is the Glu-115. 3 residues coordinate Zn(2+): Glu-116, Glu-140, and His-309.

This sequence belongs to the peptidase M20A family. LysK subfamily. It depends on Zn(2+) as a cofactor. The cofactor is Co(2+).

It localises to the cytoplasm. The enzyme catalyses [amino-group carrier protein]-C-terminal-gamma-(L-lysyl)-L-glutamate + H2O = [amino-group carrier protein]-C-terminal-L-glutamate + L-lysine. It carries out the reaction [amino-group carrier protein]-C-terminal-gamma-(L-ornithyl)-L-glutamate + H2O = [amino-group carrier protein]-C-terminal-L-glutamate + L-ornithine. Its pathway is amino-acid biosynthesis; L-lysine biosynthesis via AAA pathway; L-lysine from L-alpha-aminoadipate (Thermus route): step 5/5. It functions in the pathway amino-acid biosynthesis; L-arginine biosynthesis. Catalyzes the release of L-lysine from [LysW]-gamma-L-lysine and the release of L-ornithine from [LysW]-L-ornithine. In Pyrobaculum aerophilum (strain ATCC 51768 / DSM 7523 / JCM 9630 / CIP 104966 / NBRC 100827 / IM2), this protein is Putative [LysW]-lysine/[LysW]-ornithine hydrolase.